The following is a 171-amino-acid chain: 3-hydroxydecanoyl-[acyl-carrier-protein] dehydratase (171 aa).

The active site involves His71.

This sequence belongs to the thioester dehydratase family. FabA subfamily. As to quaternary structure, homodimer.

It is found in the cytoplasm. It carries out the reaction a (3R)-hydroxyacyl-[ACP] = a (2E)-enoyl-[ACP] + H2O. The enzyme catalyses (3R)-hydroxydecanoyl-[ACP] = (2E)-decenoyl-[ACP] + H2O. The catalysed reaction is (2E)-decenoyl-[ACP] = (3Z)-decenoyl-[ACP]. The protein operates within lipid metabolism; fatty acid biosynthesis. Necessary for the introduction of cis unsaturation into fatty acids. Catalyzes the dehydration of (3R)-3-hydroxydecanoyl-ACP to E-(2)-decenoyl-ACP and then its isomerization to Z-(3)-decenoyl-ACP. Can catalyze the dehydratase reaction for beta-hydroxyacyl-ACPs with saturated chain lengths up to 16:0, being most active on intermediate chain length. The protein is 3-hydroxydecanoyl-[acyl-carrier-protein] dehydratase of Sinorhizobium fredii (strain NBRC 101917 / NGR234).